Here is a 352-residue protein sequence, read N- to C-terminus: Uroporphyrinogen decarboxylase (352 aa).

Residues 26-30 (RQAGR), Asp76, Tyr153, Ser208, and His323 contribute to the substrate site.

Belongs to the uroporphyrinogen decarboxylase family. In terms of assembly, homodimer.

It is found in the cytoplasm. It catalyses the reaction uroporphyrinogen III + 4 H(+) = coproporphyrinogen III + 4 CO2. The protein operates within porphyrin-containing compound metabolism; protoporphyrin-IX biosynthesis; coproporphyrinogen-III from 5-aminolevulinate: step 4/4. Catalyzes the decarboxylation of four acetate groups of uroporphyrinogen-III to yield coproporphyrinogen-III. The sequence is that of Uroporphyrinogen decarboxylase from Synechococcus sp. (strain CC9902).